Reading from the N-terminus, the 155-residue chain is Protein-export protein SecB (155 aa).

This sequence belongs to the SecB family. In terms of assembly, homotetramer, a dimer of dimers. One homotetramer interacts with 1 SecA dimer.

The protein localises to the cytoplasm. One of the proteins required for the normal export of preproteins out of the cell cytoplasm. It is a molecular chaperone that binds to a subset of precursor proteins, maintaining them in a translocation-competent state. It also specifically binds to its receptor SecA. The chain is Protein-export protein SecB from Escherichia coli O127:H6 (strain E2348/69 / EPEC).